The sequence spans 171 residues: Translation initiation factor IF-3 (171 aa).

The protein belongs to the IF-3 family. As to quaternary structure, monomer.

The protein resides in the cytoplasm. Its function is as follows. IF-3 binds to the 30S ribosomal subunit and shifts the equilibrium between 70S ribosomes and their 50S and 30S subunits in favor of the free subunits, thus enhancing the availability of 30S subunits on which protein synthesis initiation begins. The protein is Translation initiation factor IF-3 of Thermus thermophilus (strain ATCC BAA-163 / DSM 7039 / HB27).